Reading from the N-terminus, the 116-residue chain is Promotilin (116 aa).

An N-terminal signal peptide occupies residues 1 to 25 (MVSRKAVAVLLMVHVAVMLASQTEA). The interval 39–74 (REKERNKGQKKSLIVQQRSEEVGPLDPVEPPEEEEN) is disordered.

The protein belongs to the motilin family.

Its subcellular location is the secreted. In terms of biological role, plays an important role in the regulation of interdigestive gastrointestinal motility and indirectly causes rhythmic contraction of duodenal and colonic smooth muscle. The protein is Promotilin (MLN) of Felis catus (Cat).